Reading from the N-terminus, the 118-residue chain is Small ribosomal subunit protein uS13 (118 aa).

The interval 92 to 118 is disordered; that stretch reads RRSLPVRGQRTKTNARTRKGPRKPIKK.

Belongs to the universal ribosomal protein uS13 family. In terms of assembly, part of the 30S ribosomal subunit. Forms a loose heterodimer with protein S19. Forms two bridges to the 50S subunit in the 70S ribosome.

In terms of biological role, located at the top of the head of the 30S subunit, it contacts several helices of the 16S rRNA. In the 70S ribosome it contacts the 23S rRNA (bridge B1a) and protein L5 of the 50S subunit (bridge B1b), connecting the 2 subunits; these bridges are implicated in subunit movement. Contacts the tRNAs in the A and P-sites. In Acinetobacter baylyi (strain ATCC 33305 / BD413 / ADP1), this protein is Small ribosomal subunit protein uS13.